We begin with the raw amino-acid sequence, 809 residues long: Cell division control protein 48 homolog A (809 aa).

Ser-2 carries the post-translational modification N-acetylserine. Position 41 is a phosphoserine (Ser-41). ADP is bound by residues Gly-210, 248–256, and His-387; that span reads GPPGSGKTL. ATP is bound at residue 521 to 529; sequence GPPGCGKTL. Positions 782–809 are disordered; the sequence is AGSGATTGVADPFATSAAAAGDDDDLYN. The segment covering 791-801 has biased composition (low complexity); sequence ADPFATSAAAA.

It belongs to the AAA ATPase family. As to quaternary structure, homohexamer. Interacts with SERK1, GRF6, KAPP and SYP31, but not with KNOLLE. Component of the SERK1 signaling complex, composed of KAPP, CDC48A, GRF6 or GRF7, SERK1, SERK2, SERK3/BAK1 and BRI1. Interacts with PUX1, PUX2, PUX3, PUX4, PUX5, PUX7 and PUX11 via its N-terminus. In terms of processing, phosphorylated on at least one threonine residue and on Ser-41 by SERK1.

The protein localises to the nucleus. It is found in the cytoplasm. The protein resides in the cytoskeleton. It localises to the phragmoplast. Its subcellular location is the cell membrane. Its function is as follows. Probably functions in cell division and growth processes. Interacts with certain SNAREs as part of specialized membrane fusion events where vesicles from the same organelle fuse (homotypic fusion). The protein is Cell division control protein 48 homolog A (CDC48A) of Arabidopsis thaliana (Mouse-ear cress).